Consider the following 76-residue polypeptide: RNA-binding protein KhpA (76 aa).

Residues 29-76 form the KH domain; that stretch reads SLHIELSVHPDDMGKVIGKQGRTAKALRSVVYAAATKQKRRVRLDIID.

Belongs to the KhpA RNA-binding protein family. Forms a complex with KhpB.

Its subcellular location is the cytoplasm. In terms of biological role, a probable RNA chaperone. Forms a complex with KhpB which binds to cellular RNA and controls its expression. Plays a role in peptidoglycan (PG) homeostasis and cell length regulation. This is RNA-binding protein KhpA from Halalkalibacterium halodurans (strain ATCC BAA-125 / DSM 18197 / FERM 7344 / JCM 9153 / C-125) (Bacillus halodurans).